Here is a 134-residue protein sequence, read N- to C-terminus: Small ribosomal subunit protein uS9 (134 aa).

Residues Ser98–Lys114 show a composition bias toward basic and acidic residues. A disordered region spans residues Ser98–Arg134. Residues Lys115 to Arg134 show a composition bias toward basic residues.

The protein belongs to the universal ribosomal protein uS9 family.

The protein is Small ribosomal subunit protein uS9 of Chlamydia caviae (strain ATCC VR-813 / DSM 19441 / 03DC25 / GPIC) (Chlamydophila caviae).